The chain runs to 229 residues: Lytic polysaccharide monooxygenase-like protein ham-7 (229 aa).

Positions 1–17 (MLTSTLLALASAALASA) are cleaved as a signal peptide. Cu(2+) is bound at residue His18. Disulfide bonds link Cys47/Cys157 and Cys122/Cys178. Asn55, Asn98, Asn139, Asn174, and Asn180 each carry an N-linked (GlcNAc...) asparagine glycan. Residue Ser206 is the site of GPI-anchor amidated serine attachment. A propeptide spans 207–229 (AAASLARMAGWVPLVAGGLWLML) (removed in mature form).

The protein belongs to the X325 family. Cu(2+) serves as cofactor.

The protein resides in the cell membrane. Its function is as follows. Lytic polysaccharide monooxygenase-like protein that has diverged to biological functions other than polysaccharide degradation since it does not perform oxidative cleavage of polysaccharides. Acts as the major cell wall sensor that regulates MAK-1-dependent hyphal anastomosis, the fusion of hyphal cells. May also act as a cell surface-bound protein that functions in the copper-accumulation pathway. This Neurospora crassa (strain ATCC 24698 / 74-OR23-1A / CBS 708.71 / DSM 1257 / FGSC 987) protein is Lytic polysaccharide monooxygenase-like protein ham-7.